We begin with the raw amino-acid sequence, 71 residues long: uncharacterized protein (71 aa).

The chain crosses the membrane as a helical span at residues 5–22 (VVMCSGLFCSVFAGAFML).

It is found in the membrane. This is an uncharacterized protein from Bacillus subtilis (strain 168).